The primary structure comprises 205 residues: Holliday junction branch migration complex subunit RuvA (205 aa).

The segment at 1 to 64 (MIGRLRGVLV…EDAQLLYGFI (64 aa)) is domain I. The segment at 65–143 (TKQERALFRL…SLLETSAGSE (79 aa)) is domain II. The interval 144–156 (REFMLKSNYTPAP) is flexible linker. The segment at 157–205 (VVNTAEEDAIAALLSLGYKPAQASKAVSAAFKEGMSSEDLIKSSLKSML) is domain III.

It belongs to the RuvA family. In terms of assembly, homotetramer. Forms an RuvA(8)-RuvB(12)-Holliday junction (HJ) complex. HJ DNA is sandwiched between 2 RuvA tetramers; dsDNA enters through RuvA and exits via RuvB. An RuvB hexamer assembles on each DNA strand where it exits the tetramer. Each RuvB hexamer is contacted by two RuvA subunits (via domain III) on 2 adjacent RuvB subunits; this complex drives branch migration. In the full resolvosome a probable DNA-RuvA(4)-RuvB(12)-RuvC(2) complex forms which resolves the HJ.

It localises to the cytoplasm. In terms of biological role, the RuvA-RuvB-RuvC complex processes Holliday junction (HJ) DNA during genetic recombination and DNA repair, while the RuvA-RuvB complex plays an important role in the rescue of blocked DNA replication forks via replication fork reversal (RFR). RuvA specifically binds to HJ cruciform DNA, conferring on it an open structure. The RuvB hexamer acts as an ATP-dependent pump, pulling dsDNA into and through the RuvAB complex. HJ branch migration allows RuvC to scan DNA until it finds its consensus sequence, where it cleaves and resolves the cruciform DNA. This Shewanella woodyi (strain ATCC 51908 / MS32) protein is Holliday junction branch migration complex subunit RuvA.